A 148-amino-acid chain; its full sequence is Deoxyuridine 5'-triphosphate nucleotidohydrolase (148 aa).

Residues Arg67–Gly69, Asn80, Thr84–Asp86, and Lys94 contribute to the substrate site.

Belongs to the dUTPase family. The cofactor is Mg(2+).

The catalysed reaction is dUTP + H2O = dUMP + diphosphate + H(+). It participates in pyrimidine metabolism; dUMP biosynthesis; dUMP from dCTP (dUTP route): step 2/2. In terms of biological role, this enzyme is involved in nucleotide metabolism: it produces dUMP, the immediate precursor of thymidine nucleotides and it decreases the intracellular concentration of dUTP so that uracil cannot be incorporated into DNA. The protein is Deoxyuridine 5'-triphosphate nucleotidohydrolase of Orientia tsutsugamushi (strain Boryong) (Rickettsia tsutsugamushi).